The chain runs to 122 residues: Small ribosomal subunit protein uS13 (122 aa).

A disordered region spans residues 95-122; that stretch reads GLPVRGQRTHTNARTRKGPAKPIAGKKK.

Belongs to the universal ribosomal protein uS13 family. As to quaternary structure, part of the 30S ribosomal subunit. Forms a loose heterodimer with protein S19. Forms two bridges to the 50S subunit in the 70S ribosome.

In terms of biological role, located at the top of the head of the 30S subunit, it contacts several helices of the 16S rRNA. In the 70S ribosome it contacts the 23S rRNA (bridge B1a) and protein L5 of the 50S subunit (bridge B1b), connecting the 2 subunits; these bridges are implicated in subunit movement. Contacts the tRNAs in the A and P-sites. This is Small ribosomal subunit protein uS13 from Caulobacter vibrioides (strain ATCC 19089 / CIP 103742 / CB 15) (Caulobacter crescentus).